A 573-amino-acid polypeptide reads, in one-letter code: Solute carrier family 41 member 2 (573 aa).

Over 1–162 (MTNSKGRSIT…KESSGIMALQ (162 aa)) the chain is Extracellular. 2 positions are modified to phosphoserine: serine 136 and serine 137. A helical transmembrane segment spans residues 163-183 (ILVPFLLAGFGTVSAGMVLDI). Over 184 to 195 (VQHWEVFRKVTE) the chain is Cytoplasmic. A helical transmembrane segment spans residues 196–216 (VFILVPALLGLKGNLEMTLAS). The Extracellular segment spans residues 217–245 (RLSTAVNIGKMDSPIEKWNLIIGNLALKQ). Residues 246-266 (VQATVVGFLAAVAAIILGWIP) traverse the membrane as a helical segment. Topologically, residues 267-282 (EGKYYLDHSILLCSSS) are cytoplasmic. Residues 283–303 (VATAFIASLLQGIIMVGVIVG) traverse the membrane as a helical segment. Residues 304-313 (SKKTGINPDN) are Extracellular-facing. The chain crosses the membrane as a helical span at residues 314 to 334 (VATPIAASFGDLITLAILAWI). The Cytoplasmic segment spans residues 335–347 (SQGLYSCLETYYY). A helical membrane pass occupies residues 348–368 (ISPLVGVFFLALTPIWIIIAA). Residues 369–376 (KHPATRTV) are Extracellular-facing. A helical membrane pass occupies residues 377–397 (LHSGWEPVITAMVISSIGGLI). The Cytoplasmic portion of the chain corresponds to 398-406 (LDTTVSDPN). Residues 407–427 (LVGIVVYTPVINGIGGNLVAI) form a helical membrane-spanning segment. The Extracellular portion of the chain corresponds to 428–469 (QASRISTYLHLHSIPGELPDEPKGCYYPFRTFFGPGVNNKSA). A helical membrane pass occupies residues 470-490 (QVLLLLVIPGHLIFLYTIHLM). Residues 491–498 (KSGHTSLT) lie on the Cytoplasmic side of the membrane. A helical transmembrane segment spans residues 499 to 519 (IIFIVVYLFGAVLQVFTLLWI). At 520–543 (ADWMVHHFWRKGKDPDSFSIPYLT) the chain is on the extracellular side. A helical membrane pass occupies residues 544-564 (ALGDLLGTALLALSFHFLWLI). The Cytoplasmic portion of the chain corresponds to 565–573 (GDRDGDVGD).

The protein belongs to the SLC41A transporter family.

Its subcellular location is the cell membrane. The enzyme catalyses Mg(2+)(in) = Mg(2+)(out). The catalysed reaction is Mn(2+)(in) = Mn(2+)(out). It catalyses the reaction Co(2+)(in) = Co(2+)(out). It carries out the reaction Ni(2+)(in) = Ni(2+)(out). The enzyme catalyses Fe(2+)(in) = Fe(2+)(out). In terms of biological role, acts as a plasma-membrane magnesium transporter. Can also mediate the transport of other divalent metal cations in an order of Ba(2+) &gt; Ni(2+) &gt; Co(2+) &gt; Fe(2+) &gt; Mn(2+). This is Solute carrier family 41 member 2 (SLC41A2) from Homo sapiens (Human).